Reading from the N-terminus, the 617-residue chain is Proline--tRNA ligase (617 aa).

Belongs to the class-II aminoacyl-tRNA synthetase family. ProS type 1 subfamily. As to quaternary structure, homodimer.

It is found in the cytoplasm. It catalyses the reaction tRNA(Pro) + L-proline + ATP = L-prolyl-tRNA(Pro) + AMP + diphosphate. In terms of biological role, catalyzes the attachment of proline to tRNA(Pro) in a two-step reaction: proline is first activated by ATP to form Pro-AMP and then transferred to the acceptor end of tRNA(Pro). As ProRS can inadvertently accommodate and process non-cognate amino acids such as alanine and cysteine, to avoid such errors it has two additional distinct editing activities against alanine. One activity is designated as 'pretransfer' editing and involves the tRNA(Pro)-independent hydrolysis of activated Ala-AMP. The other activity is designated 'posttransfer' editing and involves deacylation of mischarged Ala-tRNA(Pro). The misacylated Cys-tRNA(Pro) is not edited by ProRS. In Streptococcus pneumoniae (strain 70585), this protein is Proline--tRNA ligase.